A 230-amino-acid polypeptide reads, in one-letter code: Large ribosomal subunit protein uL1 (230 aa).

This sequence belongs to the universal ribosomal protein uL1 family. In terms of assembly, part of the 50S ribosomal subunit.

Binds directly to 23S rRNA. The L1 stalk is quite mobile in the ribosome, and is involved in E site tRNA release. In terms of biological role, protein L1 is also a translational repressor protein, it controls the translation of the L11 operon by binding to its mRNA. In Ligilactobacillus salivarius (strain UCC118) (Lactobacillus salivarius), this protein is Large ribosomal subunit protein uL1.